We begin with the raw amino-acid sequence, 174 residues long: 3-hydroxyanthranilate 3,4-dioxygenase (174 aa).

Arg-47 provides a ligand contact to O2. Residues His-51, Glu-57, and His-95 each coordinate Fe cation. Glu-57 contributes to the substrate binding site. Substrate contacts are provided by Arg-99 and Glu-110. Fe cation contacts are provided by Cys-125, Cys-128, Cys-162, and Cys-165.

The protein belongs to the 3-HAO family. As to quaternary structure, homodimer. It depends on Fe(2+) as a cofactor.

It carries out the reaction 3-hydroxyanthranilate + O2 = (2Z,4Z)-2-amino-3-carboxymuconate 6-semialdehyde. The protein operates within cofactor biosynthesis; NAD(+) biosynthesis; quinolinate from L-kynurenine: step 3/3. Functionally, catalyzes the oxidative ring opening of 3-hydroxyanthranilate to 2-amino-3-carboxymuconate semialdehyde, which spontaneously cyclizes to quinolinate. The sequence is that of 3-hydroxyanthranilate 3,4-dioxygenase from Paraburkholderia phytofirmans (strain DSM 17436 / LMG 22146 / PsJN) (Burkholderia phytofirmans).